Reading from the N-terminus, the 626-residue chain is Serine/threonine-protein kinase PknH (626 aa).

Residues 1–403 (MSDAQDSRVG…QTPRKTNPWP (403 aa)) lie on the Cytoplasmic side of the membrane. The region spanning 16–276 (YHLKRLLGRG…DLALAAHEAL (261 aa)) is the Protein kinase domain. ATP is bound by residues 22-30 (LGRGGMGEV) and K45. D139 (proton acceptor) is an active-site residue. T170 carries the phosphothreonine modification. A disordered region spans residues 292–396 (QESTLPAPPK…GGPSPWAQTP (105 aa)). Pro residues-rich tracts occupy residues 297–308 (PAPPKPVPPPTM) and 316–342 (RQPPAPPVTPPGVQPAPKPSYTPPAQP). The segment covering 343-355 (GPAGQRPGPTGQP) has biased composition (low complexity). A helical membrane pass occupies residues 404 to 424 (LVAGAAAVVLVLVLGAIGIWI). Residues 425 to 626 (AIRPKPVQPP…AKIVDKVNKE (202 aa)) are Extracellular-facing. 2 disulfide bridges follow: C482–C545 and C587–C604.

The protein belongs to the protein kinase superfamily. Ser/Thr protein kinase family. Requires a divalent metal cation as cofactor. Post-translationally, autophosphorylated on threonine and serine residues. Dephosphorylated by PstP.

It is found in the cell membrane. The enzyme catalyses L-seryl-[protein] + ATP = O-phospho-L-seryl-[protein] + ADP + H(+). The catalysed reaction is L-threonyl-[protein] + ATP = O-phospho-L-threonyl-[protein] + ADP + H(+). Its function is as follows. May regulate bacterial growth in response to external signals to facilitate adaptation to the host environment. The sequence is that of Serine/threonine-protein kinase PknH (pknH) from Mycobacterium tuberculosis (strain CDC 1551 / Oshkosh).